A 276-amino-acid polypeptide reads, in one-letter code: Probable ABC transporter permease protein NosY (276 aa).

A run of 6 helical transmembrane segments spans residues 20 to 40 (WLLAISLLFAVLAVGIAWLGA), 55 to 75 (IASLASLATFLMPLIALLLAY), 111 to 131 (ILALAVLIGFGCAALAIALLV), 146 to 166 (FMISSTLLGWVFLAFAYVLSG), 179 to 199 (LGVWFLFVLVFDLVLLALLVL), and 251 to 271 (VLWLCLLAWIGVSLLLAYAIF).

As to quaternary structure, the complex may be composed of an ATP-binding protein (NosF), a transmembrane protein (NosY) and a solute-binding protein (NosD).

Its subcellular location is the cell inner membrane. Its function is as follows. Required for the assembly of the copper chromophores of nitrous oxide reductase. Could be part of the ABC transporter complex NosDFY. This is Probable ABC transporter permease protein NosY from Stutzerimonas stutzeri (Pseudomonas stutzeri).